Reading from the N-terminus, the 361-residue chain is Arginine N(omega)-methyltransferase (361 aa).

Residues 1–17 show a composition bias toward basic and acidic residues; sequence MRHVQEARAVPAEHEAR. Positions 1 to 24 are disordered; sequence MRHVQEARAVPAEHEARPAPVTMP. The region spanning 65 to 361 is the SAM-dependent MTase PRMT-type domain; sequence DADAFAQIAR…WSDFTLRVSI (297 aa).

This sequence belongs to the class I-like SAM-binding methyltransferase superfamily. Protein arginine N-methyltransferase family.

The enzyme catalyses L-arginine + S-adenosyl-L-methionine = N(omega)-methyl-L-arginine + S-adenosyl-L-homocysteine + H(+). It functions in the pathway antibiotic biosynthesis. Its function is as follows. Involved in the biosynthesis of the glucosamine-nitrosourea antibiotic streptozotocin (SZN). Catalyzes the conversion of L-arginine to N(omega)-methyl-L-arginine (L-NMA), using S-adenosyl-L-methionine (SAM) as a methyl donor. This Streptomyces achromogenes subsp. streptozoticus protein is Arginine N(omega)-methyltransferase.